Reading from the N-terminus, the 604-residue chain is NADP-dependent malic enzyme, mitochondrial (604 aa).

Residues 28-50 (SAPAQGCHSKSGPPRPVPLKKRG) are disordered. Y137 (proton donor) is an active-site residue. R190 is a binding site for NADP(+). The Proton acceptor role is filled by K208. 3 residues coordinate a divalent metal cation: E280, D281, and D304. NADP(+) is bound at residue D304. At S371 the chain carries Phosphoserine. N443 contributes to the NADP(+) binding site.

It belongs to the malic enzymes family. Mg(2+) is required as a cofactor. The cofactor is Mn(2+).

It localises to the mitochondrion matrix. The enzyme catalyses (S)-malate + NADP(+) = pyruvate + CO2 + NADPH. The catalysed reaction is oxaloacetate + H(+) = pyruvate + CO2. The chain is NADP-dependent malic enzyme, mitochondrial (Me3) from Mus musculus (Mouse).